The primary structure comprises 453 residues: Chromosomal replication initiator protein DnaA (453 aa).

The domain I, interacts with DnaA modulators stretch occupies residues 1-74 (MKEKQFWNRI…GFEIYDAEIT (74 aa)). The segment at 74-113 (TPHYIFTKPQDTTSSQVEEATNLTLYDYSPKLVSIPYSDT) is domain II. A domain III, AAA+ region region spans residues 114–331 (GLKEKYTFDN…GAINDITLIA (218 aa)). Positions 158, 160, 161, and 162 each coordinate ATP. Residues 332–453 (RVKKIKDITI…EIESIKKKIK (122 aa)) form a domain IV, binds dsDNA region.

Belongs to the DnaA family. Oligomerizes as a right-handed, spiral filament on DNA at oriC. Interacts (via domains I and III) with CcrZ.

The protein resides in the cytoplasm. CcrZ stimulates DnaA, possibly by phosphorylation of an intermediate molecule, to initiate DNA replication. Functionally, plays an essential role in the initiation and regulation of chromosomal replication. ATP-DnaA binds to the origin of replication (oriC) to initiate formation of the DNA replication initiation complex once per cell cycle. Binds the DnaA box (a 9 base pair repeat at the origin) and separates the double-stranded (ds)DNA. Forms a right-handed helical filament on oriC DNA; dsDNA binds to the exterior of the filament while single-stranded (ss)DNA is stabiized in the filament's interior. The ATP-DnaA-oriC complex binds and stabilizes one strand of the AT-rich DNA unwinding element (DUE), permitting loading of DNA polymerase. After initiation quickly degrades to an ADP-DnaA complex that is not apt for DNA replication. Binds acidic phospholipids. Mutations in this gene suppress a deletion of cell cycle regulator ccrZ. The protein is Chromosomal replication initiator protein DnaA of Streptococcus pneumoniae serotype 2 (strain D39 / NCTC 7466).